The chain runs to 1405 residues: DNA-directed RNA polymerase subunit beta' (1405 aa).

C71, C73, C86, and C89 together coordinate Zn(2+). Mg(2+) is bound by residues D462, D464, and D466. Zn(2+)-binding residues include C820, C893, C900, and C903.

Belongs to the RNA polymerase beta' chain family. As to quaternary structure, the RNAP catalytic core consists of 2 alpha, 1 beta, 1 beta' and 1 omega subunit. When a sigma factor is associated with the core the holoenzyme is formed, which can initiate transcription. Requires Mg(2+) as cofactor. Zn(2+) serves as cofactor.

It carries out the reaction RNA(n) + a ribonucleoside 5'-triphosphate = RNA(n+1) + diphosphate. DNA-dependent RNA polymerase catalyzes the transcription of DNA into RNA using the four ribonucleoside triphosphates as substrates. The sequence is that of DNA-directed RNA polymerase subunit beta' from Methylorubrum extorquens (strain CM4 / NCIMB 13688) (Methylobacterium extorquens).